Consider the following 432-residue polypeptide: Serine--tRNA ligase (432 aa).

235–237 (TSE) is a binding site for L-serine. Position 266-268 (266-268 (RSE)) interacts with ATP. Glu289 is a binding site for L-serine. 353 to 356 (EISS) serves as a coordination point for ATP. Ser388 contacts L-serine.

Belongs to the class-II aminoacyl-tRNA synthetase family. Type-1 seryl-tRNA synthetase subfamily. In terms of assembly, homodimer. The tRNA molecule binds across the dimer.

Its subcellular location is the cytoplasm. The catalysed reaction is tRNA(Ser) + L-serine + ATP = L-seryl-tRNA(Ser) + AMP + diphosphate + H(+). It carries out the reaction tRNA(Sec) + L-serine + ATP = L-seryl-tRNA(Sec) + AMP + diphosphate + H(+). Its pathway is aminoacyl-tRNA biosynthesis; selenocysteinyl-tRNA(Sec) biosynthesis; L-seryl-tRNA(Sec) from L-serine and tRNA(Sec): step 1/1. In terms of biological role, catalyzes the attachment of serine to tRNA(Ser). Is also able to aminoacylate tRNA(Sec) with serine, to form the misacylated tRNA L-seryl-tRNA(Sec), which will be further converted into selenocysteinyl-tRNA(Sec). In Paraburkholderia phymatum (strain DSM 17167 / CIP 108236 / LMG 21445 / STM815) (Burkholderia phymatum), this protein is Serine--tRNA ligase.